Consider the following 123-residue polypeptide: Large ribosomal subunit protein bL20 (123 aa).

The protein belongs to the bacterial ribosomal protein bL20 family.

Functionally, binds directly to 23S ribosomal RNA and is necessary for the in vitro assembly process of the 50S ribosomal subunit. It is not involved in the protein synthesizing functions of that subunit. The sequence is that of Large ribosomal subunit protein bL20 from Pseudothermotoga lettingae (strain ATCC BAA-301 / DSM 14385 / NBRC 107922 / TMO) (Thermotoga lettingae).